Here is a 273-residue protein sequence, read N- to C-terminus: Methylthioribulose-1-phosphate dehydratase (273 aa).

The tract at residues 1–27 (MCPTCPPSAASASSENNNTDNNDHLVL) is disordered. Position 114 (Cys-114) interacts with substrate. Zn(2+) is bound by residues His-132 and His-134. Glu-168 acts as the Proton donor/acceptor in catalysis. Residue His-225 coordinates Zn(2+).

Belongs to the aldolase class II family. MtnB subfamily. It depends on Zn(2+) as a cofactor.

The protein localises to the cytoplasm. The enzyme catalyses 5-(methylsulfanyl)-D-ribulose 1-phosphate = 5-methylsulfanyl-2,3-dioxopentyl phosphate + H2O. It participates in amino-acid biosynthesis; L-methionine biosynthesis via salvage pathway; L-methionine from S-methyl-5-thio-alpha-D-ribose 1-phosphate: step 2/6. Its function is as follows. Catalyzes the dehydration of methylthioribulose-1-phosphate (MTRu-1-P) into 2,3-diketo-5-methylthiopentyl-1-phosphate (DK-MTP-1-P). The sequence is that of Methylthioribulose-1-phosphate dehydratase from Sordaria macrospora (strain ATCC MYA-333 / DSM 997 / K(L3346) / K-hell).